The following is a 135-amino-acid chain: Large ribosomal subunit protein uL16c (135 aa).

Belongs to the universal ribosomal protein uL16 family. As to quaternary structure, part of the 50S ribosomal subunit.

The protein localises to the plastid. It is found in the chloroplast. This is Large ribosomal subunit protein uL16c from Phaseolus vulgaris (Kidney bean).